We begin with the raw amino-acid sequence, 654 residues long: Chaperone protein DnaK (654 aa).

Position 205 is a phosphothreonine; by autocatalysis (threonine 205). The segment at 592-654 is disordered; sequence ELERQMQQIG…EVEILDDKKP (63 aa). Polar residues predominate over residues 608-621; it reads AGQSETQSTGPGSY. The span at 622-636 shows a compositional bias: low complexity; that stretch reads QESSNQSSQHQTNNN.

Belongs to the heat shock protein 70 family.

Its function is as follows. Acts as a chaperone. The chain is Chaperone protein DnaK from Protochlamydia amoebophila (strain UWE25).